The following is a 227-amino-acid chain: Cytochrome c oxidase subunit 2 (227 aa).

Residues 1 to 14 (MAHPVQLGLQDATS) are Mitochondrial intermembrane-facing. Residues 15-45 (PVMEELVTFHDHALMAMFLISFLILYALSAT) form a helical membrane-spanning segment. Topologically, residues 46-59 (LTTKLTNTNITDAQ) are mitochondrial matrix. Residues 60 to 87 (EMETIWTILPAVILVLIALPSLRILYMT) traverse the membrane as a helical segment. Over 88-227 (DEINNPSFTI…IFEMGPVFTL (140 aa)) the chain is Mitochondrial intermembrane. 6 residues coordinate Cu cation: histidine 161, cysteine 196, glutamate 198, cysteine 200, histidine 204, and methionine 207. Glutamate 198 is a Mg(2+) binding site.

Belongs to the cytochrome c oxidase subunit 2 family. In terms of assembly, component of the cytochrome c oxidase (complex IV, CIV), a multisubunit enzyme composed of 14 subunits. The complex is composed of a catalytic core of 3 subunits MT-CO1, MT-CO2 and MT-CO3, encoded in the mitochondrial DNA, and 11 supernumerary subunits COX4I, COX5A, COX5B, COX6A, COX6B, COX6C, COX7A, COX7B, COX7C, COX8 and NDUFA4, which are encoded in the nuclear genome. The complex exists as a monomer or a dimer and forms supercomplexes (SCs) in the inner mitochondrial membrane with NADH-ubiquinone oxidoreductase (complex I, CI) and ubiquinol-cytochrome c oxidoreductase (cytochrome b-c1 complex, complex III, CIII), resulting in different assemblies (supercomplex SCI(1)III(2)IV(1) and megacomplex MCI(2)III(2)IV(2)). Found in a complex with TMEM177, COA6, COX18, COX20, SCO1 and SCO2. Interacts with TMEM177 in a COX20-dependent manner. Interacts with COX20. Interacts with COX16. Cu cation serves as cofactor.

The protein resides in the mitochondrion inner membrane. The catalysed reaction is 4 Fe(II)-[cytochrome c] + O2 + 8 H(+)(in) = 4 Fe(III)-[cytochrome c] + 2 H2O + 4 H(+)(out). In terms of biological role, component of the cytochrome c oxidase, the last enzyme in the mitochondrial electron transport chain which drives oxidative phosphorylation. The respiratory chain contains 3 multisubunit complexes succinate dehydrogenase (complex II, CII), ubiquinol-cytochrome c oxidoreductase (cytochrome b-c1 complex, complex III, CIII) and cytochrome c oxidase (complex IV, CIV), that cooperate to transfer electrons derived from NADH and succinate to molecular oxygen, creating an electrochemical gradient over the inner membrane that drives transmembrane transport and the ATP synthase. Cytochrome c oxidase is the component of the respiratory chain that catalyzes the reduction of oxygen to water. Electrons originating from reduced cytochrome c in the intermembrane space (IMS) are transferred via the dinuclear copper A center (CU(A)) of subunit 2 and heme A of subunit 1 to the active site in subunit 1, a binuclear center (BNC) formed by heme A3 and copper B (CU(B)). The BNC reduces molecular oxygen to 2 water molecules using 4 electrons from cytochrome c in the IMS and 4 protons from the mitochondrial matrix. The protein is Cytochrome c oxidase subunit 2 (MT-CO2) of Theropithecus gelada (Gelada baboon).